The primary structure comprises 360 residues: Magnesium-protoporphyrin IX monomethyl ester [oxidative] cyclase (360 aa).

The protein belongs to the AcsF family. Fe cation is required as a cofactor.

It carries out the reaction Mg-protoporphyrin IX 13-monomethyl ester + 3 NADPH + 3 O2 + 2 H(+) = 3,8-divinyl protochlorophyllide a + 3 NADP(+) + 5 H2O. It participates in porphyrin-containing compound metabolism; chlorophyll biosynthesis (light-independent). Functionally, catalyzes the formation of the isocyclic ring in chlorophyll biosynthesis. Mediates the cyclase reaction, which results in the formation of divinylprotochlorophyllide (Pchlide) characteristic of all chlorophylls from magnesium-protoporphyrin IX 13-monomethyl ester (MgPMME). The polypeptide is Magnesium-protoporphyrin IX monomethyl ester [oxidative] cyclase (Synechococcus sp. (strain WH7803)).